Reading from the N-terminus, the 831-residue chain is Multiphosphoryl transfer protein (831 aa).

The region spanning 1–90 (MLTIQFLCPL…EYIQVRFIDS (90 aa)) is the HPr domain. H15 (pros-phosphohistidine intermediate; for HPr activity) is an active-site residue. H15 carries the phosphohistidine; by EI modification. The interval 119-650 (GNVLASGVGV…AVKSQLRQLD (532 aa)) is PTS EI. Residue H298 is the Tele-phosphohistidine intermediate; for PTS EI activity of the active site. The residue at position 298 (H298) is a Phosphohistidine; by autocatalysis. Positions 405 and 441 each coordinate phosphoenolpyruvate. Residues E540 and D564 each contribute to the Mg(2+) site. Residues 563–564 (ND) and R574 contribute to the phosphoenolpyruvate site. The Proton donor; for EI activity role is filled by C611. Residues 685–828 (PLLALENIFV…QSILTLLETE (144 aa)) form the PTS EIIA type-2 domain. H747 functions as the Tele-phosphohistidine intermediate; for PTS EIIA activity in the catalytic mechanism. Phosphohistidine; by HPr is present on H747.

It belongs to the PEP-utilizing enzyme family. Mg(2+) is required as a cofactor.

It is found in the cytoplasm. It carries out the reaction L-histidyl-[protein] + phosphoenolpyruvate = N(pros)-phospho-L-histidyl-[protein] + pyruvate. The enzyme catalyses D-fructose(out) + N(pros)-phospho-L-histidyl-[protein] = D-fructose 1-phosphate(in) + L-histidyl-[protein]. Multifunctional protein that includes general (non sugar-specific) and sugar-specific components of the phosphoenolpyruvate-dependent sugar phosphotransferase system (sugar PTS). This major carbohydrate active transport system catalyzes the phosphorylation of incoming sugar substrates concomitantly with their translocation across the cell membrane. The enzyme II FryABC PTS system is involved in fructose transport. This Escherichia coli O6:H1 (strain CFT073 / ATCC 700928 / UPEC) protein is Multiphosphoryl transfer protein (fryA).